The primary structure comprises 185 residues: Photosystem I assembly protein Ycf4 (185 aa).

A run of 2 helical transmembrane segments spans residues 20–40 (GNFF…SVGA) and 57–77 (ILFF…LFIS).

This sequence belongs to the Ycf4 family.

Its subcellular location is the plastid. The protein resides in the chloroplast thylakoid membrane. In terms of biological role, seems to be required for the assembly of the photosystem I complex. This chain is Photosystem I assembly protein Ycf4, found in Lolium perenne (Perennial ryegrass).